A 202-amino-acid chain; its full sequence is LexA repressor 1 (202 aa).

A DNA-binding region (H-T-H motif) is located at residues 28–48 (RAEIAQELGFKSPNAAEEHLK). Catalysis depends on for autocatalytic cleavage activity residues S123 and K160.

The protein belongs to the peptidase S24 family. As to quaternary structure, homodimer.

The catalysed reaction is Hydrolysis of Ala-|-Gly bond in repressor LexA.. In terms of biological role, represses a number of genes involved in the response to DNA damage (SOS response), including recA and lexA. In the presence of single-stranded DNA, RecA interacts with LexA causing an autocatalytic cleavage which disrupts the DNA-binding part of LexA, leading to derepression of the SOS regulon and eventually DNA repair. The protein is LexA repressor 1 of Pseudomonas syringae pv. tomato (strain ATCC BAA-871 / DC3000).